Consider the following 453-residue polypeptide: Major fimbrium subunit FimC (453 aa).

An N-terminal signal peptide occupies residues 1 to 28; that stretch reads MKMKYFHHPSGLLPRLLLLLLLTMGAVA. Cys-29 carries N-palmitoyl cysteine lipidation. The S-diacylglycerol cysteine moiety is linked to residue Cys-29. The propeptide occupies 29–56; it reads CTKEDNPDQPTSDEVATVKMSLDDVEMR.

The protein belongs to the bacteroidetes fimbrillin superfamily. FimA/Mfa1 family. Fimbriae are composed of a major, structural subunit and the minor components FimC, FimD and FimE. Identified in a complex composed of FimC, FimD and FimE (in vitro). The complex interacts with host extracellular matrix proteins, including fibronectin and type I collagen. Interacts with host CXCR4.

It localises to the fimbrium. The protein resides in the cell outer membrane. In terms of biological role, minor component of fimbriae. These long, filamentous pili are attached to the cell surface; they mediate biofilm formation, adhesion onto host cells and onto other bacteria that are part of the oral microbiome. They play an important role in invasion of periodontal tissues and are major virulence factors. FimC, FimD and FimE contribute to interaction with host CXCR4 and thereby down-regulate the TLR2-mediated host immune response. In Porphyromonas gingivalis (strain ATCC 33277 / DSM 20709 / CIP 103683 / JCM 12257 / NCTC 11834 / 2561), this protein is Major fimbrium subunit FimC.